The primary structure comprises 182 residues: AMKMSFELEIGAQAPLGFWDPLGLLADADQERFERLRYVEVKHGRIAMLAIAGHLTQQNARLPGMLSNSANLSFADMPNGVAALSKIPPGGLAQIFGFIGFLELAVMKNVEGSFPGDFTLGGNPFASSWDAMSEETQESKRAIELNNGRAAQMGILALMVHEELNNKPYVINDLLGASYNFN.

The transit peptide at 1-4 (AMKM) directs the protein to the chloroplast. 3 consecutive transmembrane segments (helical) span residues 46–66 (IAML…PGML), 87–107 (IPPG…LAVM), and 148–168 (GRAA…NNKP).

It belongs to the fucoxanthin chlorophyll protein family. In terms of assembly, the LHC complex of chromophytic algae is composed of fucoxanthin, chlorophyll A and C bound non-covalently by fucoxanthin chlorophyll proteins (FCPs). The ratio of pigments in this LHC is; fucoxanthin: chlorophyll C: chlorophyll A; (0.6-1): (0.1-0.3): (1).

The protein localises to the plastid. It localises to the chloroplast thylakoid membrane. Functionally, the light-harvesting complex (LHC) functions as a light receptor, it captures and delivers excitation energy to photosystems with which it is closely associated. Energy is transferred from the carotenoid and chlorophyll C (or B) to chlorophyll A and the photosynthetic reaction centers where it is used to synthesize ATP and reducing power. This is Fucoxanthin-chlorophyll a-c binding protein D, chloroplastic (FCPD) from Macrocystis pyrifera (Giant kelp).